The sequence spans 115 residues: ATP synthase subunit g, mitochondrial (115 aa).

Met-1 is subject to N-acetylmethionine. A phosphoserine mark is found at Ser-3 and Ser-62.

Belongs to the ATPase g subunit family. As to quaternary structure, F-type ATPases have 2 components, CF(1) - the catalytic core - and CF(0) - the membrane proton channel. In yeast, the dimeric form of ATP synthase consists of 17 polypeptides: alpha, beta, gamma, delta, epsilon, 4 (B), 5 (OSCP), 6 (A), 8, 9 (C), d, E (Tim11), f, g, h, i/j and k. In terms of processing, phosphorylation on Ser-62 impairs ATP synthase dimerization.

Its subcellular location is the mitochondrion membrane. Functionally, mitochondrial membrane ATP synthase (F(1)F(0) ATP synthase or Complex V) produces ATP from ADP in the presence of a proton gradient across the membrane which is generated by electron transport complexes of the respiratory chain. F-type ATPases consist of two structural domains, F(1) - containing the extramembraneous catalytic core, and F(0) - containing the membrane proton channel, linked together by a central stalk and a peripheral stalk. During catalysis, ATP synthesis in the catalytic domain of F(1) is coupled via a rotary mechanism of the central stalk subunits to proton translocation. Part of the complex F(0) domain. Minor subunit located with subunit a in the membrane. The polypeptide is ATP synthase subunit g, mitochondrial (ATP20) (Saccharomyces cerevisiae (strain ATCC 204508 / S288c) (Baker's yeast)).